A 68-amino-acid polypeptide reads, in one-letter code: MKVYDCCDKVRELYSLIGSGDQGYIPQAITCAVKTLNDIAADEALPKEARERAAFAAANLLISDFEDK.

The protein belongs to the UPF0253 family.

The polypeptide is UPF0253 protein VF_0662 (Aliivibrio fischeri (strain ATCC 700601 / ES114) (Vibrio fischeri)).